Reading from the N-terminus, the 130-residue chain is Small ribosomal subunit protein uS9 (130 aa).

The segment at 105–130 (TRDPRMKERKKYGLKKARRAPQFSKR) is disordered. Basic residues predominate over residues 111–130 (KERKKYGLKKARRAPQFSKR).

This sequence belongs to the universal ribosomal protein uS9 family.

This chain is Small ribosomal subunit protein uS9, found in Acetivibrio thermocellus (strain ATCC 27405 / DSM 1237 / JCM 9322 / NBRC 103400 / NCIMB 10682 / NRRL B-4536 / VPI 7372) (Clostridium thermocellum).